The primary structure comprises 329 residues: Ribosomal RNA small subunit methyltransferase C (329 aa).

This sequence belongs to the methyltransferase superfamily. RsmC family. In terms of assembly, monomer.

It localises to the cytoplasm. It catalyses the reaction guanosine(1207) in 16S rRNA + S-adenosyl-L-methionine = N(2)-methylguanosine(1207) in 16S rRNA + S-adenosyl-L-homocysteine + H(+). In terms of biological role, specifically methylates the guanine in position 1207 of 16S rRNA in the 30S particle. The polypeptide is Ribosomal RNA small subunit methyltransferase C (Actinobacillus pleuropneumoniae serotype 7 (strain AP76)).